Consider the following 615-residue polypeptide: DNA mismatch repair protein MutL (615 aa).

The disordered stretch occupies residues 363 to 397 (FAEPAAREPVAPRYTPAPASGSRPAAPWPNAQPGY). Over residues 364 to 391 (AEPAAREPVAPRYTPAPASGSRPAAPWP) the composition is skewed to low complexity.

The protein belongs to the DNA mismatch repair MutL/HexB family.

Functionally, this protein is involved in the repair of mismatches in DNA. It is required for dam-dependent methyl-directed DNA mismatch repair. May act as a 'molecular matchmaker', a protein that promotes the formation of a stable complex between two or more DNA-binding proteins in an ATP-dependent manner without itself being part of a final effector complex. In Shigella boydii serotype 4 (strain Sb227), this protein is DNA mismatch repair protein MutL.